We begin with the raw amino-acid sequence, 231 residues long: Orotate phosphoribosyltransferase (231 aa).

Residue K29 coordinates 5-phospho-alpha-D-ribose 1-diphosphate. 37–38 (FF) provides a ligand contact to orotate. 5-phospho-alpha-D-ribose 1-diphosphate contacts are provided by residues 75 to 76 (YK), R107, K108, K111, H113, and 133 to 141 (DDVISRCTA). Residues S137 and R165 each coordinate orotate.

Belongs to the purine/pyrimidine phosphoribosyltransferase family. PyrE subfamily. In terms of assembly, homodimer.

It catalyses the reaction orotidine 5'-phosphate + diphosphate = orotate + 5-phospho-alpha-D-ribose 1-diphosphate. It participates in pyrimidine metabolism; UMP biosynthesis via de novo pathway; UMP from orotate: step 1/2. Its function is as follows. Catalyzes the transfer of a ribosyl phosphate group from 5-phosphoribose 1-diphosphate to orotate, leading to the formation of orotidine monophosphate (OMP). The protein is Orotate phosphoribosyltransferase (URA5) of Podospora anserina (Pleurage anserina).